Consider the following 133-residue polypeptide: uncharacterized protein (133 aa).

This sequence belongs to the ycf68 family.

Its subcellular location is the plastid. The protein resides in the chloroplast. This is an uncharacterized protein from Oryza sativa subsp. japonica (Rice).